Reading from the N-terminus, the 70-residue chain is Small ribosomal subunit protein bS21 (70 aa).

It belongs to the bacterial ribosomal protein bS21 family.

This chain is Small ribosomal subunit protein bS21, found in Helicobacter hepaticus (strain ATCC 51449 / 3B1).